Reading from the N-terminus, the 363-residue chain is Cobalt-precorrin-5B C(1)-methyltransferase (363 aa).

Belongs to the CbiD family.

It carries out the reaction Co-precorrin-5B + S-adenosyl-L-methionine = Co-precorrin-6A + S-adenosyl-L-homocysteine. It participates in cofactor biosynthesis; adenosylcobalamin biosynthesis; cob(II)yrinate a,c-diamide from sirohydrochlorin (anaerobic route): step 6/10. Catalyzes the methylation of C-1 in cobalt-precorrin-5B to form cobalt-precorrin-6A. The protein is Cobalt-precorrin-5B C(1)-methyltransferase of Burkholderia pseudomallei (strain K96243).